The chain runs to 587 residues: Tyrosine-protein kinase transforming protein Src (587 aa).

Positions 1–58 (MGSSKSKPKDPSQRRRSLEPPDSTHHGGFPASQTPNKTAAPDTHRTPSRSFGTVATEP) are disordered. Glycine 2 is lipidated: N-myristoyl glycine; by host. The span at 7 to 25 (KPKDPSQRRRSLEPPDSTH) shows a compositional bias: basic and acidic residues. An SH3 domain is found at 81–142 (GGVTTFVALY…PSNYVAPSDS (62 aa)). Residues 148-245 (WYFGKITRRE…GLCHRLTNVC (98 aa)) form the SH2 domain. In terms of domain architecture, Protein kinase spans 267 to 520 (LRLEVKLGQG…YLQAFLEDYF (254 aa)). ATP-binding positions include 273 to 281 (LGQGCFGEV) and lysine 295. Aspartate 386 (proton acceptor) is an active-site residue. At tyrosine 416 the chain carries Phosphotyrosine; by autocatalysis.

The protein belongs to the protein kinase superfamily. Tyr protein kinase family. SRC subfamily. Post-translationally, the phosphorylated form is termed pp60v-src.

The catalysed reaction is L-tyrosyl-[protein] + ATP = O-phospho-L-tyrosyl-[protein] + ADP + H(+). Functionally, this phosphoprotein, required for both the initiation and the maintenance of neoplastic transformation, is a protein kinase that catalyzes the phosphorylation of tyrosine residues in vitro. This chain is Tyrosine-protein kinase transforming protein Src (V-SRC), found in Galliformes.